The primary structure comprises 198 residues: Probable nicotinate-nucleotide adenylyltransferase (198 aa).

This sequence belongs to the NadD family.

The enzyme catalyses nicotinate beta-D-ribonucleotide + ATP + H(+) = deamido-NAD(+) + diphosphate. Its pathway is cofactor biosynthesis; NAD(+) biosynthesis; deamido-NAD(+) from nicotinate D-ribonucleotide: step 1/1. In terms of biological role, catalyzes the reversible adenylation of nicotinate mononucleotide (NaMN) to nicotinic acid adenine dinucleotide (NaAD). The polypeptide is Probable nicotinate-nucleotide adenylyltransferase (Herpetosiphon aurantiacus (strain ATCC 23779 / DSM 785 / 114-95)).